The following is a 196-amino-acid chain: MQFSENFERAKKEALISLEIALRKGEVDEDIIPLLKKINSLDNYFTTSSCSGRISVMEMPHFGDKVNAKWLGKWHREVSLDEVLGAIKKHRSGQLWFLVRSPILHVGAKTLEDAIRLVNLAVSCGFKYSNIKSISNKKLIVEIRSTERMDVLLGENGRILVGEEYLRKIVEIANAQVRRFKEKLKRLESNIDALNR.

The protein belongs to the TYW3 family.

The enzyme catalyses 4-demethyl-7-[(3S)-3-amino-3-carboxypropyl]wyosine(37) in tRNA(Phe) + S-adenosyl-L-methionine = 7-[(3S)-3-amino-3-carboxypropyl]wyosine(37) in tRNA(Phe) + S-adenosyl-L-homocysteine + H(+). Its function is as follows. S-adenosyl-L-methionine-dependent methyltransferase that acts as a component of the wyosine derivatives biosynthesis pathway. Probably methylates N-4 position of wybutosine-86 to produce wybutosine-72. The chain is tRNA(Phe) 7-((3-amino-3-carboxypropyl)-4-demethylwyosine(37)-N(4))-methyltransferase 1 from Pyrococcus furiosus (strain ATCC 43587 / DSM 3638 / JCM 8422 / Vc1).